The primary structure comprises 207 residues: Large ribosomal subunit protein uL4 (207 aa).

Positions 58–85 are disordered; sequence AGSGKKPFKQKGTGQARQGCRRAPQYPG.

Belongs to the universal ribosomal protein uL4 family. As to quaternary structure, part of the 50S ribosomal subunit.

One of the primary rRNA binding proteins, this protein initially binds near the 5'-end of the 23S rRNA. It is important during the early stages of 50S assembly. It makes multiple contacts with different domains of the 23S rRNA in the assembled 50S subunit and ribosome. In terms of biological role, forms part of the polypeptide exit tunnel. In Geotalea uraniireducens (strain Rf4) (Geobacter uraniireducens), this protein is Large ribosomal subunit protein uL4.